We begin with the raw amino-acid sequence, 251 residues long: Flap endonuclease Xni (251 aa).

Asp104 lines the Mg(2+) pocket. In terms of domain architecture, 5'-3' exonuclease spans 160–249 (VLPRQLPDYW…IDGNLQQLRL (90 aa)). K(+)-binding residues include Leu171, Ala172, Pro180, Val182, and Ile185. Residues 184-189 (GIGPKS) are interaction with DNA.

It belongs to the Xni family. It depends on Mg(2+) as a cofactor. K(+) is required as a cofactor.

In terms of biological role, has flap endonuclease activity. During DNA replication, flap endonucleases cleave the 5'-overhanging flap structure that is generated by displacement synthesis when DNA polymerase encounters the 5'-end of a downstream Okazaki fragment. This chain is Flap endonuclease Xni, found in Salmonella dublin (strain CT_02021853).